The following is a 305-amino-acid chain: Ribonuclease BN (305 aa).

7 residues coordinate Zn(2+): histidine 64, histidine 66, aspartate 68, histidine 69, histidine 141, aspartate 212, and histidine 270. Aspartate 68 functions as the Proton acceptor in the catalytic mechanism.

This sequence belongs to the RNase Z family. RNase BN subfamily. In terms of assembly, homodimer. The cofactor is Zn(2+).

Its function is as follows. Zinc phosphodiesterase, which has both exoribonuclease and endoribonuclease activities. This is Ribonuclease BN from Enterobacter sp. (strain 638).